The following is a 134-amino-acid chain: Large ribosomal subunit protein bL20 (134 aa).

This sequence belongs to the bacterial ribosomal protein bL20 family.

Binds directly to 23S ribosomal RNA and is necessary for the in vitro assembly process of the 50S ribosomal subunit. It is not involved in the protein synthesizing functions of that subunit. In Rhizobium etli (strain CIAT 652), this protein is Large ribosomal subunit protein bL20.